An 850-amino-acid polypeptide reads, in one-letter code: Serine/threonine-protein phosphatase 6 regulatory subunit 3-B (850 aa).

Disordered regions lie at residues 610 to 652 (NISY…VNHE), 683 to 778 (SDGS…MKET), and 793 to 850 (KSEE…NGPV). Over residues 627 to 638 (DSEESTDSEEEE) the composition is skewed to acidic residues. 2 stretches are compositionally biased toward polar residues: residues 703 to 731 (ASFS…TSTE) and 764 to 778 (DQMT…MKET). Residues 826 to 839 (PSSSSQEQRISEQI) show a composition bias toward low complexity.

This sequence belongs to the SAPS family.

In terms of biological role, regulatory subunit of protein phosphatase 6 (PP6). May function as a scaffolding PP6 subunit. In Xenopus laevis (African clawed frog), this protein is Serine/threonine-protein phosphatase 6 regulatory subunit 3-B (ppp6r3-b).